We begin with the raw amino-acid sequence, 600 residues long: MNCYKTHECNELRKNDVEKEVTLSGWLYRKRDHGNLIFVDLRDFHGITQLVFNNDKDFFDEISNLKSESVITVTGIVKARTEDTVNSSISTGEIEVIVSNLQVESEVEFHCDEEIAKEERSILASIAGEQEYPENMRFKYRFLDLRREKVRNNIILRSQIISELRRLMIEQGFLDIQTPILTASSPEGARDYLVPSRLNPGKFYALPQAPQIFKQLLMVSGFDKYFQIAPCFRDEDARADRSPGEFYQLDLEMSFVTQEDIFQVIESTLYKVFAKFSRKSVDKDFPRITYKEAMLKYGSDKPDLRNPLLISDVTEIFRDSEFNIFKSNIERGMVVRAIPAPKTAEEPRSFFDKKIEHAQKEFGAKGLGYITFDKDGIAKGPIAKFLDDNRLNSIKEITNVKPGDSVFFASDKENEAATIAGKVRTLLGSELGLIDDDIFKFCWIIDFPYFVYDDKSKKIDFFHNPFSMPHGGLKDLEEKDPLDILAYQYDLVCNGIELSSGAIRNNKLNIMYRAFAIAGYSKEEVDTKFGALVRAFRFGAPPHGGIAPGVDRMVMLLADEPNIREVICFPMNQQGEDVLMGAPSKVDDKHLRELSLKVVE.

E187 contributes to the L-aspartate binding site. Positions 211 to 214 (QIFK) are aspartate. 2 residues coordinate L-aspartate: R233 and H463. Residue 233–235 (RDE) coordinates ATP. E497 is a binding site for ATP. R504 lines the L-aspartate pocket. ATP is bound at residue 549-552 (GVDR).

The protein belongs to the class-II aminoacyl-tRNA synthetase family. Type 1 subfamily. Homodimer.

It is found in the cytoplasm. The enzyme catalyses tRNA(Asx) + L-aspartate + ATP = L-aspartyl-tRNA(Asx) + AMP + diphosphate. Its function is as follows. Aspartyl-tRNA synthetase with relaxed tRNA specificity since it is able to aspartylate not only its cognate tRNA(Asp) but also tRNA(Asn). Reaction proceeds in two steps: L-aspartate is first activated by ATP to form Asp-AMP and then transferred to the acceptor end of tRNA(Asp/Asn). This chain is Aspartate--tRNA(Asp/Asn) ligase, found in Wolbachia pipientis subsp. Culex pipiens (strain wPip).